Consider the following 284-residue polypeptide: Phosphatidylglycerol--prolipoprotein diacylglyceryl transferase (284 aa).

The next 7 helical transmembrane spans lie at 19 to 39, 60 to 80, 98 to 118, 130 to 150, 199 to 219, 225 to 245, and 258 to 278; these read ISFYWYGMMYVLSFIFAMWFL, LLYLNFLGVVIGGRIGYVLFY, GGMSFHGGLIGVIISIMWFSY, FIVPAVPVGLGLGRLGNFING, QLYEMILEGIVLFVVIYIFSC, GSISGLFLLLYGLFRIIIEFF, and FITLGQVLSFPMVIFGFIIMY. R143 contacts a 1,2-diacyl-sn-glycero-3-phospho-(1'-sn-glycerol).

Belongs to the Lgt family.

The protein resides in the cell inner membrane. The catalysed reaction is L-cysteinyl-[prolipoprotein] + a 1,2-diacyl-sn-glycero-3-phospho-(1'-sn-glycerol) = an S-1,2-diacyl-sn-glyceryl-L-cysteinyl-[prolipoprotein] + sn-glycerol 1-phosphate + H(+). The protein operates within protein modification; lipoprotein biosynthesis (diacylglyceryl transfer). Catalyzes the transfer of the diacylglyceryl group from phosphatidylglycerol to the sulfhydryl group of the N-terminal cysteine of a prolipoprotein, the first step in the formation of mature lipoproteins. The polypeptide is Phosphatidylglycerol--prolipoprotein diacylglyceryl transferase (Blochmanniella floridana).